The following is a 95-amino-acid chain: Aspartyl/glutamyl-tRNA(Asn/Gln) amidotransferase subunit C (95 aa).

The protein belongs to the GatC family. In terms of assembly, heterotrimer of A, B and C subunits.

The catalysed reaction is L-glutamyl-tRNA(Gln) + L-glutamine + ATP + H2O = L-glutaminyl-tRNA(Gln) + L-glutamate + ADP + phosphate + H(+). It catalyses the reaction L-aspartyl-tRNA(Asn) + L-glutamine + ATP + H2O = L-asparaginyl-tRNA(Asn) + L-glutamate + ADP + phosphate + 2 H(+). Its function is as follows. Allows the formation of correctly charged Asn-tRNA(Asn) or Gln-tRNA(Gln) through the transamidation of misacylated Asp-tRNA(Asn) or Glu-tRNA(Gln) in organisms which lack either or both of asparaginyl-tRNA or glutaminyl-tRNA synthetases. The reaction takes place in the presence of glutamine and ATP through an activated phospho-Asp-tRNA(Asn) or phospho-Glu-tRNA(Gln). This Methylobacterium radiotolerans (strain ATCC 27329 / DSM 1819 / JCM 2831 / NBRC 15690 / NCIMB 10815 / 0-1) protein is Aspartyl/glutamyl-tRNA(Asn/Gln) amidotransferase subunit C.